The following is a 149-amino-acid chain: MSILNTTEIMELIPNRYPILFMDYVDELEPGKSIVATKNVTINEEFFQGHFPGNPVMPGVLIIESLAQAASILILKSEEFAGKTAYLGAINGAKFRQIVRPGDVLKLHVEMIKKKRNMGVVETFAMVGDKKVCQAELTFIVGATDKKDK.

His-50 is an active-site residue.

Belongs to the thioester dehydratase family. FabZ subfamily.

Its subcellular location is the cytoplasm. It carries out the reaction a (3R)-hydroxyacyl-[ACP] = a (2E)-enoyl-[ACP] + H2O. In terms of biological role, involved in unsaturated fatty acids biosynthesis. Catalyzes the dehydration of short chain beta-hydroxyacyl-ACPs and long chain saturated and unsaturated beta-hydroxyacyl-ACPs. This chain is 3-hydroxyacyl-[acyl-carrier-protein] dehydratase FabZ, found in Pediococcus pentosaceus (strain ATCC 25745 / CCUG 21536 / LMG 10740 / 183-1w).